The primary structure comprises 145 residues: NADH-ubiquinone oxidoreductase subunit 8 (145 aa).

2 4Fe-4S ferredoxin-type domains span residues 43 to 73 (LRFYWCGLERCIACRLCDLICPSLALDVRVG) and 83 to 112 (DWFTLSYRRCIYCGFCMHVCPTDAITHSLF). 8 residues coordinate [4Fe-4S] cluster: cysteine 53, cysteine 56, cysteine 59, cysteine 63, cysteine 92, cysteine 95, cysteine 98, and cysteine 102.

The protein belongs to the complex I 23 kDa subunit family. Requires [4Fe-4S] cluster as cofactor.

The protein resides in the mitochondrion. The enzyme catalyses a ubiquinone + NADH + 5 H(+)(in) = a ubiquinol + NAD(+) + 4 H(+)(out). Its function is as follows. Core subunit of the mitochondrial membrane respiratory chain NADH dehydrogenase (Complex I) that is believed to belong to the minimal assembly required for catalysis. Complex I functions in the transfer of electrons from NADH to the respiratory chain. The immediate electron acceptor for the enzyme is believed to be ubiquinone. May donate electrons to ubiquinone. This is NADH-ubiquinone oxidoreductase subunit 8 (M-ISP1) from Trypanosoma brucei brucei.